The chain runs to 329 residues: Replication factor C small subunit 1 (329 aa).

Residue 44 to 51 (GPPGTGKT) coordinates ATP.

This sequence belongs to the activator 1 small subunits family. RfcS subfamily. In terms of assembly, heteromultimer composed of small subunits (RfcS) and large subunits (RfcL).

Its function is as follows. Part of the RFC clamp loader complex which loads the PCNA sliding clamp onto DNA. The polypeptide is Replication factor C small subunit 1 (Pyrobaculum arsenaticum (strain DSM 13514 / JCM 11321 / PZ6)).